A 516-amino-acid polypeptide reads, in one-letter code: TBC1 domain family member 22A (516 aa).

At A2 the chain carries N-acetylalanine. Disordered regions lie at residues E63 to S88 and L102 to D186. Over residues Q107–T116 the composition is skewed to polar residues. Positions E122–P133 are enriched in pro residues. The span at V143–S179 shows a compositional bias: polar residues. S144 and S166 each carry phosphoserine. The 225-residue stretch at G221–P445 folds into the Rab-GAP TBC domain.

Homodimer. Interacts with ACBD3 and ARFGEF1. Interacts with YWHAB, YWHAE, YWHAG, YWHAH, YWHAQ and YWHAZ.

Its function is as follows. May act as a GTPase-activating protein for Rab family protein(s). This Mus musculus (Mouse) protein is TBC1 domain family member 22A (Tbc1d22a).